The sequence spans 243 residues: Arginine transport ATP-binding protein ArtP (243 aa).

Residues 3–242 (IRVKNLNFFY…KTEQFKHYLS (240 aa)) enclose the ABC transporter domain. 35–42 (GPSGAGKS) is an ATP binding site.

Belongs to the ABC transporter superfamily. In terms of assembly, the complex is composed of two ATP-binding proteins (ArtP), two transmembrane proteins (ArtM and ArtQ) and a solute-binding protein (ArtI).

The protein localises to the cell inner membrane. The catalysed reaction is a polar amino acid(out) + ATP + H2O = a polar amino acid(in) + ADP + phosphate + H(+). It carries out the reaction L-arginine(out) + ATP + H2O = L-arginine(in) + ADP + phosphate + H(+). Its function is as follows. Part of the ABC transporter complex ArtPIQM involved in arginine transport. Probably responsible for energy coupling to the transport system. This chain is Arginine transport ATP-binding protein ArtP (artP), found in Haemophilus influenzae (strain ATCC 51907 / DSM 11121 / KW20 / Rd).